Consider the following 152-residue polypeptide: Endoribonuclease YbeY (152 aa).

3 residues coordinate Zn(2+): histidine 113, histidine 117, and histidine 123.

Belongs to the endoribonuclease YbeY family. Zn(2+) serves as cofactor.

The protein resides in the cytoplasm. Functionally, single strand-specific metallo-endoribonuclease involved in late-stage 70S ribosome quality control and in maturation of the 3' terminus of the 16S rRNA. The protein is Endoribonuclease YbeY of Paracidovorax citrulli (strain AAC00-1) (Acidovorax citrulli).